The chain runs to 615 residues: Proteasome-associated ATPase (615 aa).

Residues 1 to 27 are disordered; that stretch reads MSESERSEASEVFGTSPDSRLSSEDAA. Residues 22–99 adopt a coiled-coil conformation; it reads SSEDAAELEQ…LREEVDRLGQ (78 aa). 302–307 is an ATP binding site; that stretch reads GCGKTL. Positions 614–615 are docks into pockets in the proteasome alpha-ring; the sequence is YL.

It belongs to the AAA ATPase family. In terms of assembly, homohexamer. Assembles into a hexameric ring structure that caps the 20S proteasome core. Strongly interacts with the prokaryotic ubiquitin-like protein Pup through a hydrophobic interface; the interacting region of ARC lies in its N-terminal coiled-coil domain. There is one Pup binding site per ARC hexamer ring. Upon ATP-binding, the C-terminus of ARC interacts with the alpha-rings of the proteasome core, possibly by binding to the intersubunit pockets.

The protein operates within protein degradation; proteasomal Pup-dependent pathway. Functionally, ATPase which is responsible for recognizing, binding, unfolding and translocation of pupylated proteins into the bacterial 20S proteasome core particle. May be essential for opening the gate of the 20S proteasome via an interaction with its C-terminus, thereby allowing substrate entry and access to the site of proteolysis. Thus, the C-termini of the proteasomal ATPase may function like a 'key in a lock' to induce gate opening and therefore regulate proteolysis. This chain is Proteasome-associated ATPase, found in Mycolicibacterium vanbaalenii (strain DSM 7251 / JCM 13017 / BCRC 16820 / KCTC 9966 / NRRL B-24157 / PYR-1) (Mycobacterium vanbaalenii).